Here is a 117-residue protein sequence, read N- to C-terminus: Large ribosomal subunit protein uL22 (117 aa).

Belongs to the universal ribosomal protein uL22 family. Part of the 50S ribosomal subunit.

In terms of biological role, this protein binds specifically to 23S rRNA; its binding is stimulated by other ribosomal proteins, e.g. L4, L17, and L20. It is important during the early stages of 50S assembly. It makes multiple contacts with different domains of the 23S rRNA in the assembled 50S subunit and ribosome. Its function is as follows. The globular domain of the protein is located near the polypeptide exit tunnel on the outside of the subunit, while an extended beta-hairpin is found that lines the wall of the exit tunnel in the center of the 70S ribosome. This chain is Large ribosomal subunit protein uL22, found in Latilactobacillus sakei subsp. sakei (strain 23K) (Lactobacillus sakei subsp. sakei).